The following is a 744-amino-acid chain: Polyadenylate-binding protein, cytoplasmic and nuclear (744 aa).

Over residues 1-11 (MSEVANSTSPV) the composition is skewed to polar residues. Positions 1-42 (MSEVANSTSPVQDGADANGAQINTNVPAASGDAPTPTTAAQQ) are disordered. Positions 33-42 (APTPTTAAQQ) are enriched in low complexity. 4 consecutive RRM domains span residues 48–126 (ASLY…WSQR), 136–213 (GNVF…HHIP), 229–306 (TNIY…RAQK), and 332–462 (VNLY…LAQR). Disordered stretches follow at residues 368-411 (EEKK…AGDK), 527-550 (GRGA…NAQQ), 607-651 (IAGG…PGVD), and 723-744 (VKNK…EEKA). Residues 376–397 (KEVKEEKKEDEKKEDEEAKEGS) are compositionally biased toward basic and acidic residues. Composition is skewed to gly residues over residues 527 to 545 (GRGA…GRGG), 609 to 632 (GGPG…GGRG), and 640 to 649 (PQGGRPGGPG). The PABC domain occupies 647–724 (GPGVDMSVLS…AMSVYDEYVK (78 aa)).

It belongs to the polyadenylate-binding protein type-1 family.

It localises to the cytoplasm. Its subcellular location is the nucleus. In terms of biological role, binds the poly(A) tail of mRNA. Appears to be an important mediator of the multiple roles of the poly(A) tail in mRNA biogenesis, stability and translation. In the nucleus, involved in both mRNA cleavage and polyadenylation. Is also required for efficient mRNA export to the cytoplasm. Acts in concert with a poly(A)-specific nuclease (PAN) to affect poly(A) tail shortening, which may occur concomitantly with either nucleocytoplasmic mRNA transport or translational initiation. In the cytoplasm, stimulates translation initiation and regulates mRNA decay through translation termination-coupled poly(A) shortening, probably mediated by PAN. This chain is Polyadenylate-binding protein, cytoplasmic and nuclear (PAB1), found in Phaeosphaeria nodorum (strain SN15 / ATCC MYA-4574 / FGSC 10173) (Glume blotch fungus).